Consider the following 695-residue polypeptide: NADPH--cytochrome P450 reductase (695 aa).

The Lumenal portion of the chain corresponds to 1–8 (MAQLDTLD). The chain crosses the membrane as a helical span at residues 9–31 (LVVLVVLLVGSAAYFTKGTYWAV). Residues 32 to 695 (PKDPYAASGP…SGSYQEDVWS (664 aa)) lie on the Cytoplasmic side of the membrane. In terms of domain architecture, Flavodoxin-like spans 66–221 (CVIFYGSQTG…DFLAWKEPMW (156 aa)). FMN is bound by residues 72–77 (SQTGTA), 123–126 (ATYG), 169–178 (LGNNTYEHYQ), and D204. Positions 277–538 (HNPFIAPIVE…HVRHSNFKLP (262 aa)) constitute an FAD-binding FR-type domain. R296 contacts NADP(+). FAD contacts are provided by residues 451–454 (RYYS), 469–471 (TAV), and 486–489 (GVTT). NADP(+) contacts are provided by residues T552, 614–615 (SR), 620–624 (KVYVQ), and E656. W694 is an FAD binding site.

This sequence belongs to the NADPH--cytochrome P450 reductase family. It in the N-terminal section; belongs to the flavodoxin family. The protein in the C-terminal section; belongs to the flavoprotein pyridine nucleotide cytochrome reductase family. Requires FAD as cofactor. FMN is required as a cofactor.

It is found in the endoplasmic reticulum membrane. The protein localises to the mitochondrion outer membrane. It localises to the cell membrane. The catalysed reaction is 2 oxidized [cytochrome P450] + NADPH = 2 reduced [cytochrome P450] + NADP(+) + H(+). Functionally, this enzyme is required for electron transfer from NADP to cytochrome P450 in microsomes. It can also provide electron transfer to heme oxygenase and cytochrome B5. Involved in ergosterol biosynthesis. This is NADPH--cytochrome P450 reductase from Aspergillus terreus (strain NIH 2624 / FGSC A1156).